The primary structure comprises 639 residues: E3 ubiquitin-protein ligase RNF12 (639 aa).

Disordered regions lie at residues 1 to 28, 67 to 403, and 467 to 534; these read MESA…RLDR, RLQQ…ESER, and NDTD…GGVT. Residues 11–21 show a composition bias toward low complexity; that stretch reads STEQSESQRQS. 2 stretches are compositionally biased toward polar residues: residues 110-138 and 147-166; these read SVRQ…NPNS and INVN…QSSE. Basic and acidic residues predominate over residues 213–228; it reads RSPDQRRTRARTDRSR. Residues 244 to 253 show a composition bias toward polar residues; that stretch reads HSSSQTVDAS. The span at 269-286 shows a compositional bias: low complexity; the sequence is SSQMQNSSSSNETEGSSR. Polar residues predominate over residues 290–302; sequence HITARQQALGTEG. 2 stretches are compositionally biased toward low complexity: residues 303–327 and 335–348; these read QSQS…SQST and SRSS…DSSS. The segment covering 349–358 has biased composition (polar residues); that stretch reads NAETTGTGQR. Over residues 372-382 the composition is skewed to basic and acidic residues; the sequence is RPGDYRQRDSI. The segment covering 383–399 has biased composition (polar residues); the sequence is ANRTRSRSQTPNNTVTY. 2 stretches are compositionally biased toward pro residues: residues 473–482 and 493–506; these read NPTPVSPPAA and PEPP…PEPV. The segment at 585-626 adopts an RING-type; atypical zinc-finger fold; it reads CSVCITEYTEGNKLRKLPCSHEYHVHCIDRWLSENSTCPICR. Residues 636 to 639 carry the PDZ-binding motif; sequence ESIV.

It belongs to the RNF12 family. In terms of assembly, forms homodimers through the C-terminal region. The N-terminus interacts with the homeobox of LIM/homeobox factor lhx1/lim1, with lhx3/lim3 and lhx5/lim5, and with the N-terminus of ldb1.

Its subcellular location is the nucleus. It catalyses the reaction S-ubiquitinyl-[E2 ubiquitin-conjugating enzyme]-L-cysteine + [acceptor protein]-L-lysine = [E2 ubiquitin-conjugating enzyme]-L-cysteine + N(6)-ubiquitinyl-[acceptor protein]-L-lysine.. It functions in the pathway protein modification; protein ubiquitination. Functionally, acts as an E3 ubiquitin-protein ligase specific for ldb1, mediating ubiquitination and proteasome-dependent degradation of excess ldb1 in a RING-dependent manner. Does not degrade ldb1 bound to lhx1/lim1, nor lim1 itself and thus contributes to the establishment of proper ldb1-lhx1/lim1 stoichiometry and the formation of a ldb1-lhx1/lim1 complex. Interferes with Spemann organizer function and suppresses secondary axis formation induced by ldb1 and lhx1/lim1. In Xenopus tropicalis (Western clawed frog), this protein is E3 ubiquitin-protein ligase RNF12.